The following is a 270-amino-acid chain: uncharacterized protein (270 aa).

Alanine 30–asparagine 55 is an NADP(+) binding site. Serine 157 provides a ligand contact to substrate. Residue tyrosine 171 is the Proton acceptor of the active site.

This sequence belongs to the short-chain dehydrogenases/reductases (SDR) family.

This is an uncharacterized protein from Mycobacterium tuberculosis (strain CDC 1551 / Oshkosh).